Reading from the N-terminus, the 249-residue chain is tRNA (guanine-N(1)-)-methyltransferase (249 aa).

S-adenosyl-L-methionine contacts are provided by residues glycine 112 and 132–137; that span reads LGDFVL.

Belongs to the RNA methyltransferase TrmD family. As to quaternary structure, homodimer.

Its subcellular location is the cytoplasm. It carries out the reaction guanosine(37) in tRNA + S-adenosyl-L-methionine = N(1)-methylguanosine(37) in tRNA + S-adenosyl-L-homocysteine + H(+). Specifically methylates guanosine-37 in various tRNAs. This is tRNA (guanine-N(1)-)-methyltransferase from Citrifermentans bemidjiense (strain ATCC BAA-1014 / DSM 16622 / JCM 12645 / Bem) (Geobacter bemidjiensis).